Reading from the N-terminus, the 122-residue chain is Large ribosomal subunit protein uL14 (122 aa).

This sequence belongs to the universal ribosomal protein uL14 family. As to quaternary structure, part of the 50S ribosomal subunit. Forms a cluster with proteins L3 and L19. In the 70S ribosome, L14 and L19 interact and together make contacts with the 16S rRNA in bridges B5 and B8.

Binds to 23S rRNA. Forms part of two intersubunit bridges in the 70S ribosome. This Lawsonia intracellularis (strain PHE/MN1-00) protein is Large ribosomal subunit protein uL14.